Consider the following 158-residue polypeptide: NADH-quinone oxidoreductase subunit B (158 aa).

Residues C37, C38, C102, and C132 each contribute to the [4Fe-4S] cluster site.

It belongs to the complex I 20 kDa subunit family. As to quaternary structure, NDH-1 is composed of 14 different subunits. Subunits NuoB, C, D, E, F, and G constitute the peripheral sector of the complex. The cofactor is [4Fe-4S] cluster.

It is found in the cell inner membrane. It catalyses the reaction a quinone + NADH + 5 H(+)(in) = a quinol + NAD(+) + 4 H(+)(out). Its function is as follows. NDH-1 shuttles electrons from NADH, via FMN and iron-sulfur (Fe-S) centers, to quinones in the respiratory chain. Couples the redox reaction to proton translocation (for every two electrons transferred, four hydrogen ions are translocated across the cytoplasmic membrane), and thus conserves the redox energy in a proton gradient. The polypeptide is NADH-quinone oxidoreductase subunit B (Hydrogenovibrio crunogenus (strain DSM 25203 / XCL-2) (Thiomicrospira crunogena)).